The chain runs to 481 residues: MCWRELLYMLPELYLLGSAMIALLLGIVVDARWVHRLSAVSMGVVVVLSWWSGVTDHVAEDVHLFNGLVLHTRYTCISRMLVGVAGFVASLLFLCARREVRYEFSVVMLFATLGAMTLVQAGHFLSLYISLELNSLSSCVLVCFNRSSERASESALKFFILSALSSCIMLYGISLVYGYSTGLECNVMQEILAGRASLGATLGCAFVLVGVLFKLAVVPFHMWAVDTYHGSPMAAMAFFLIVTKSAAILLLARIVGENGILQQSILYGIISVSGLSALVGELGALRQSNIKRLLAYSNIGQLGYVLPVVVLHGTSSYAIFHYVLTSWVINAWIFSVLLRYDDEGFELASLAGMHRSSPFVAFALVVSMVSAAGFPPFLGCWPKYFFLKSIVMSDIPTVVAFPYVLLVCAVGIVPCFYCFRIARVVYFDQPAMGAGHPALPHHLGLTVIAVVCMLLSVIALFLAQYFDILFQGLVWVFGGRT.

Helical transmembrane passes span 9 to 29, 39 to 59, 76 to 96, 104 to 124, 158 to 178, 205 to 225, 232 to 252, 265 to 285, 293 to 313, 318 to 338, 359 to 379, 399 to 419, and 443 to 463; these read MLPE…GIVV, AVSM…DHVA, CISR…FLCA, FSVV…AGHF, FFIL…LVYG, AFVL…MWAV, PMAA…LLLA, ILYG…LGAL, LLAY…VLHG, AIFH…SVLL, FVAF…PFLG, VAFP…FYCF, and LGLT…LFLA.

It belongs to the complex I subunit 2 family. In terms of assembly, NDH-1 is composed of 14 different subunits. Subunits NuoA, H, J, K, L, M, N constitute the membrane sector of the complex.

The protein localises to the cell inner membrane. It carries out the reaction a quinone + NADH + 5 H(+)(in) = a quinol + NAD(+) + 4 H(+)(out). Functionally, NDH-1 shuttles electrons from NADH, via FMN and iron-sulfur (Fe-S) centers, to quinones in the respiratory chain. The immediate electron acceptor for the enzyme in this species is believed to be ubiquinone. Couples the redox reaction to proton translocation (for every two electrons transferred, four hydrogen ions are translocated across the cytoplasmic membrane), and thus conserves the redox energy in a proton gradient. This is NADH-quinone oxidoreductase subunit N from Anaplasma marginale (strain Florida).